Reading from the N-terminus, the 244-residue chain is MSTSKRKRADEAQWNKRSTKKKGSAPQAKKPGGKGERPSLQIQTLLHSGDTMITVPSGGVCDLINTYARGSDEGNRHTSETLTYKVGVDYHFVADAASCKYSNRGTGVMWLVYDTTPGGNAPTTQDIFAYPSALKAWPTTWKVSRELCHRFVVKRRWLFTMETDGRIGSDTPPSNQSWPPCKRNVDFHKFTSGLGVRTQWKNVTDGGVGAIQRGALYLVIAPGNGITFTAHGQTRLYFKSVGNQ.

The Bipartite nuclear localization signal signature appears at 1 to 24 (MSTSKRKRADEAQWNKRSTKKKGS). The disordered stretch occupies residues 1–39 (MSTSKRKRADEAQWNKRSTKKKGSAPQAKKPGGKGERPS).

This sequence belongs to the geminiviridae capsid protein family. In terms of assembly, homomultimer. Interacts with the movement protein. Binds to single-stranded and double-stranded viral DNA.

The protein resides in the virion. The protein localises to the host nucleus. Functionally, encapsidates the viral genome into characteristic twinned ('geminate') particles. Binds the genomic viral ssDNA and shuttles it into and out of the cell nucleus. Plays a role in protection of the genome from degradation, virus acquisition and transmission by insect vectors, infectivity, and systemic movement. The CP of monopartite geminiviruses is absolutely essential for virus movement. This Avena sativa (Oat) protein is Capsid protein.